A 1042-amino-acid polypeptide reads, in one-letter code: Probable inorganic carbon transporter subunit DabA (1042 aa).

Positions 462, 464, 721, and 736 each coordinate Zn(2+).

It belongs to the inorganic carbon transporter (TC 9.A.2) DabA family. In terms of assembly, forms a complex with DabB. Requires Zn(2+) as cofactor.

The protein localises to the cell inner membrane. Part of an energy-coupled inorganic carbon pump. This chain is Probable inorganic carbon transporter subunit DabA, found in Nitrosomonas eutropha (strain DSM 101675 / C91 / Nm57).